The primary structure comprises 353 residues: UDP-N-acetylglucosamine--N-acetylmuramyl-(pentapeptide) pyrophosphoryl-undecaprenol N-acetylglucosamine transferase (353 aa).

UDP-N-acetyl-alpha-D-glucosamine is bound by residues threonine 15–glycine 17, asparagine 125, arginine 165, serine 186, and glutamine 286.

It belongs to the glycosyltransferase 28 family. MurG subfamily.

Its subcellular location is the cell inner membrane. It catalyses the reaction di-trans,octa-cis-undecaprenyl diphospho-N-acetyl-alpha-D-muramoyl-L-alanyl-D-glutamyl-meso-2,6-diaminopimeloyl-D-alanyl-D-alanine + UDP-N-acetyl-alpha-D-glucosamine = di-trans,octa-cis-undecaprenyl diphospho-[N-acetyl-alpha-D-glucosaminyl-(1-&gt;4)]-N-acetyl-alpha-D-muramoyl-L-alanyl-D-glutamyl-meso-2,6-diaminopimeloyl-D-alanyl-D-alanine + UDP + H(+). The protein operates within cell wall biogenesis; peptidoglycan biosynthesis. Its function is as follows. Cell wall formation. Catalyzes the transfer of a GlcNAc subunit on undecaprenyl-pyrophosphoryl-MurNAc-pentapeptide (lipid intermediate I) to form undecaprenyl-pyrophosphoryl-MurNAc-(pentapeptide)GlcNAc (lipid intermediate II). This chain is UDP-N-acetylglucosamine--N-acetylmuramyl-(pentapeptide) pyrophosphoryl-undecaprenol N-acetylglucosamine transferase, found in Chlamydia muridarum (strain MoPn / Nigg).